The sequence spans 705 residues: MDKEKLEKEVIKLLSKKKKPLHFLQIAKALGLGKKERKTLKKVMRKLKKEGKVKVVKGKYEYTGEEVVTGTVIAYPGGFGFLEVEGGKDIYIPPFEMVKVFHGDVVKAKVTEFKGKKEVRIIKVLKRAKKDIVAKVVFEDEQCYVVPLDENAHHRILLSKKDCQKLKEGEVVVLKITQFPTKKSPARGKVIEVLGNPKEKFIAIDVIIRKYNLPTSYPEKVIKEVEAIPEEIPEEEIKRRRDLREQLCFTIDPEKAGDFDDAVAIELTPEGYYKLYVHIADVSYYVREGTETDKEAYKRGFTYYFPDRALHMLPEKLSAKLCSLRPNEDKLAFTVEMVFDESGNLKAYDIYESVIRSKARLTYNEALALIVGDPALEKKFPNLVEPLRMMETLYRILSRKRWEMGSIDFDLPEAEVIVDEYGEPTAIYPYERHVAHRIIEHFMISANETVALHLEHAGYPCLYRVHEPPDEEKVENLLEILEGLGYKVKRPHEYTPKFFQKIIEDFEGRPEENLVRFLTLRAMARAKYSPHNVGHFGLALEHYAHFTSPIRRYPDIIVHRLLKKALRGEEIDYEKTLAYLEEAGNHLSKQERIADEAEMEAIDYLKARYMKGRIGEEFIGIITGVVAFGFFVELEENLVEGLVKINTLTDDEYVFDEPAHRLVGVRTGKVFRLGDHVKVRCIAVDEERARVEFELIEKLEKHETL.

Residues arginine 240–arginine 567 enclose the RNB domain. Residues glycine 615–isoleucine 696 form the S1 motif domain.

Belongs to the RNR ribonuclease family. RNase R subfamily.

It localises to the cytoplasm. The catalysed reaction is Exonucleolytic cleavage in the 3'- to 5'-direction to yield nucleoside 5'-phosphates.. 3'-5' exoribonuclease that releases 5'-nucleoside monophosphates and is involved in maturation of structured RNAs. This Aquifex aeolicus (strain VF5) protein is Ribonuclease R.